The chain runs to 200 residues: ATP-dependent Clp protease proteolytic subunit (200 aa).

The active-site Nucleophile is the serine 101. The active site involves histidine 126.

It belongs to the peptidase S14 family. Component of the chloroplastic Clp protease core complex.

The protein resides in the plastid. The protein localises to the chloroplast stroma. It catalyses the reaction Hydrolysis of proteins to small peptides in the presence of ATP and magnesium. alpha-casein is the usual test substrate. In the absence of ATP, only oligopeptides shorter than five residues are hydrolyzed (such as succinyl-Leu-Tyr-|-NHMec, and Leu-Tyr-Leu-|-Tyr-Trp, in which cleavage of the -Tyr-|-Leu- and -Tyr-|-Trp bonds also occurs).. Cleaves peptides in various proteins in a process that requires ATP hydrolysis. Has a chymotrypsin-like activity. Plays a major role in the degradation of misfolded proteins. This is ATP-dependent Clp protease proteolytic subunit from Adiantum capillus-veneris (Maidenhair fern).